Consider the following 178-residue polypeptide: Ribosomal RNA small subunit methyltransferase G (178 aa).

Residues Gly-54, Leu-59, 105–106 (LE), and Arg-120 each bind S-adenosyl-L-methionine.

Belongs to the methyltransferase superfamily. RNA methyltransferase RsmG family.

It is found in the cytoplasm. The catalysed reaction is guanosine(527) in 16S rRNA + S-adenosyl-L-methionine = N(7)-methylguanosine(527) in 16S rRNA + S-adenosyl-L-homocysteine. Functionally, specifically methylates the N7 position of guanine in position 527 of 16S rRNA. The protein is Ribosomal RNA small subunit methyltransferase G of Helicobacter pylori (strain HPAG1).